The primary structure comprises 571 residues: Potassium-transporting ATPase potassium-binding subunit (571 aa).

11 helical membrane-spanning segments follow: residues 5 to 25, 64 to 84, 136 to 156, 179 to 199, 254 to 274, 285 to 305, 330 to 350, 357 to 376, 421 to 441, 488 to 508, and 527 to 547; these read GWIQ…PLGS, LAYT…LYAI, GLTH…VALI, LYVL…QGIP, LSNL…TNVF, WAIL…TYWA, FGIA…CGAV, FTAL…EIII, MLGI…ATVV, LAIG…AIAG, and GGLF…LTFF.

The protein belongs to the KdpA family. In terms of assembly, the system is composed of three essential subunits: KdpA, KdpB and KdpC.

It localises to the cell inner membrane. Part of the high-affinity ATP-driven potassium transport (or Kdp) system, which catalyzes the hydrolysis of ATP coupled with the electrogenic transport of potassium into the cytoplasm. This subunit binds the periplasmic potassium ions and delivers the ions to the membrane domain of KdpB through an intramembrane tunnel. In Methylobacterium radiotolerans (strain ATCC 27329 / DSM 1819 / JCM 2831 / NBRC 15690 / NCIMB 10815 / 0-1), this protein is Potassium-transporting ATPase potassium-binding subunit.